Consider the following 150-residue polypeptide: 3-hydroxyacyl-[acyl-carrier-protein] dehydratase FabZ (150 aa).

The active site involves histidine 54.

Belongs to the thioester dehydratase family. FabZ subfamily.

It is found in the cytoplasm. The catalysed reaction is a (3R)-hydroxyacyl-[ACP] = a (2E)-enoyl-[ACP] + H2O. In terms of biological role, involved in unsaturated fatty acids biosynthesis. Catalyzes the dehydration of short chain beta-hydroxyacyl-ACPs and long chain saturated and unsaturated beta-hydroxyacyl-ACPs. This chain is 3-hydroxyacyl-[acyl-carrier-protein] dehydratase FabZ, found in Colwellia psychrerythraea (strain 34H / ATCC BAA-681) (Vibrio psychroerythus).